A 1800-amino-acid chain; its full sequence is U3 small nucleolar RNA-associated protein 10 (1800 aa).

HEAT repeat units follow at residues 426–467 (FTQS…TTPA) and 581–619 (DVDL…LYKK). 2 helical membrane-spanning segments follow: residues 944 to 964 (IQSG…AIVN) and 1000 to 1020 (ALLL…HSVM). HEAT repeat units follow at residues 1043-1081 (DQTI…AFEH), 1250-1288 (TLSL…QNPE), 1294-1333 (QHRM…KYGR), and 1755-1793 (LALL…VLGE).

It belongs to the HEATR1/UTP10 family. Component of the ribosomal small subunit (SSU) processome.

The protein resides in the nucleus. It localises to the nucleolus. Its subcellular location is the membrane. Its function is as follows. Involved in nucleolar processing of pre-18S ribosomal RNA. Involved in ribosome biosynthesis. This is U3 small nucleolar RNA-associated protein 10 from Aspergillus niger (strain ATCC MYA-4892 / CBS 513.88 / FGSC A1513).